The primary structure comprises 1387 residues: MEDLMTSYSFTEKKRIRKDFGKQRSILEVPFLLAIQVDSYREFLQEDVEPNKRKDLGLHAALKSVFPISSYSGNAALEYVGYKLGEPVFDERECRQRGMSYGAPLRVTVRLVIYDRESSTKAIKYVKEQEVYLGEIPLMTENGTFIVNGTERVIVSQLHRSPGVFFDHDRGKTHSSGKLLYSARIIPYRGSWLDFEFDPKDALFTRIDRRRKLPVSILLRALGYNNEEMLAEFFEINTFHINPDEGVQLELVPERLRGETLNFDLADGDKVIVEAGKRITARHVKQLEAAGVAALAVPDDYLVGRILSHDVVDGSTGELLANANDEISEDQLAAFRKAGVDAVGTLWVNDLDRGPYLSNTLRIDPTKTQLEALVEIYRMMRPGEPPTKEAAQNLFHNLFFTFERYDLSTVGRMKFNHRVGRKEVLGESVLYDKKYFAERNDEESKRLVAEHADTSDILEVIKVLTEIRNGRGVVDDIDHLGNRRVRSVGEMAENVFRVGLVRVERAVKERLSMAESEGLTPQELINAKPVAAAIKEFFGSSQLSRFMDQNNPLSEVTHKRRVSALGPGGLTRERAGFEVRDVHPTHYGRVCTIETPEGPNIGLINSLAVFARTNQYGFLETPYRKVLDGKVSDDVEYLSAIEENEYVIAQANALTDAKNMLTEQFVPCRFQGESLLKPPAEVHFMDVSPMQTVSVAAALVPFLEHDDANRALMGANMQRQAVPTLRSQKPLVGTGIERAVARDSGVTVNARRGGVIEQIDAARIVVKVNEAEIGGGTDAGVDIYNLIKYTRSNQNTCINQRPLVNVGDVIARGDVLADGPSTDIGELALGQNMLIAFMPWNGYNFEDSILLSERVVEEDRYTTIHIEELTCVARDTKLGPEEISADIPNVSEQALNRLDESGVVYIGAEVRAGDIMVGKVTPKGESQLTPEEKLLRAIFGEKASDVKDSSLRVPPGMDGTVIDVQVFTRDGIEKDKRARQIEESEIKRVKKDFDDQFRILEAAIYARLRSQIVGKVANGGPNLKKGDNVTDAYLDGLKKSDWFQLRMKDDDAADAIERAQKQIQAHEKEFEARFADKRGKITQGDDLAPGVLKMVKVFLAVKRRIQPGDKMAGRHGNKGVVSNVVPVEDMPYMATGEPVDIVLNPLGVPSRMNIGQILEVHLGWAAKGLGRKIQRMLEAQTAVSELRKFLDDIYNHDSAINAERVDLSQFSDEELLNLGKNLIDGVPMATPVFDGASEAEIKRMLELAELPQSGQTQLYDGRTGEAFDRKTTVGYMHYLKLNHLVDDKMHARSTGPYSLVTQQPLGGKAQFGGQRFGEMEVWALEAYGAAYTLQEMLTVKSDDVQGRNQMYKNIVDGEHEMVAGMPESFNVLVKEIRSLAINMELEE.

Belongs to the RNA polymerase beta chain family. The RNAP catalytic core consists of 2 alpha, 1 beta, 1 beta' and 1 omega subunit. When a sigma factor is associated with the core the holoenzyme is formed, which can initiate transcription.

The enzyme catalyses RNA(n) + a ribonucleoside 5'-triphosphate = RNA(n+1) + diphosphate. DNA-dependent RNA polymerase catalyzes the transcription of DNA into RNA using the four ribonucleoside triphosphates as substrates. In Xanthomonas campestris pv. campestris (strain 8004), this protein is DNA-directed RNA polymerase subunit beta.